The chain runs to 642 residues: 4-hydroxy-3-methylbut-2-enyl diphosphate reductase (642 aa).

Residues 1-282 form a 4-hydroxy-3-methylbut-2-enyl diphosphate reductase region; it reads MRKVMLAEKA…EEAISKMSEN (282 aa). [4Fe-4S] cluster is bound at residue cysteine 13. Positions 42 and 77 each coordinate (2E)-4-hydroxy-3-methylbut-2-enyl diphosphate. Residues histidine 42 and histidine 77 each contribute to the dimethylallyl diphosphate site. Residues histidine 42 and histidine 77 each coordinate isopentenyl diphosphate. A [4Fe-4S] cluster-binding site is contributed by cysteine 99. Histidine 127 is a binding site for (2E)-4-hydroxy-3-methylbut-2-enyl diphosphate. Histidine 127 contributes to the dimethylallyl diphosphate binding site. Histidine 127 contacts isopentenyl diphosphate. Residue glutamate 129 is the Proton donor of the active site. Threonine 165 lines the (2E)-4-hydroxy-3-methylbut-2-enyl diphosphate pocket. Cysteine 193 contacts [4Fe-4S] cluster. Positions 221, 222, 223, and 266 each coordinate (2E)-4-hydroxy-3-methylbut-2-enyl diphosphate. Dimethylallyl diphosphate-binding residues include serine 221, serine 222, asparagine 223, and serine 266. Isopentenyl diphosphate-binding residues include serine 221, serine 222, asparagine 223, and serine 266. 3 S1 motif domains span residues 309-377, 484-552, and 569-638; these read GASV…LSVK, GQVV…LSVK, and GSVV…LSIR.

The protein in the N-terminal section; belongs to the IspH family. It depends on [4Fe-4S] cluster as a cofactor.

It catalyses the reaction isopentenyl diphosphate + 2 oxidized [2Fe-2S]-[ferredoxin] + H2O = (2E)-4-hydroxy-3-methylbut-2-enyl diphosphate + 2 reduced [2Fe-2S]-[ferredoxin] + 2 H(+). It carries out the reaction dimethylallyl diphosphate + 2 oxidized [2Fe-2S]-[ferredoxin] + H2O = (2E)-4-hydroxy-3-methylbut-2-enyl diphosphate + 2 reduced [2Fe-2S]-[ferredoxin] + 2 H(+). It participates in isoprenoid biosynthesis; dimethylallyl diphosphate biosynthesis; dimethylallyl diphosphate from (2E)-4-hydroxy-3-methylbutenyl diphosphate: step 1/1. It functions in the pathway isoprenoid biosynthesis; isopentenyl diphosphate biosynthesis via DXP pathway; isopentenyl diphosphate from 1-deoxy-D-xylulose 5-phosphate: step 6/6. Catalyzes the conversion of 1-hydroxy-2-methyl-2-(E)-butenyl 4-diphosphate (HMBPP) into a mixture of isopentenyl diphosphate (IPP) and dimethylallyl diphosphate (DMAPP). Acts in the terminal step of the DOXP/MEP pathway for isoprenoid precursor biosynthesis. The protein is 4-hydroxy-3-methylbut-2-enyl diphosphate reductase of Clostridium acetobutylicum (strain ATCC 824 / DSM 792 / JCM 1419 / IAM 19013 / LMG 5710 / NBRC 13948 / NRRL B-527 / VKM B-1787 / 2291 / W).